A 433-amino-acid polypeptide reads, in one-letter code: Enolase (433 aa).

A (2R)-2-phosphoglycerate-binding site is contributed by Gln164. Residue Glu206 is the Proton donor of the active site. Mg(2+)-binding residues include Asp243, Glu289, and Asp316. (2R)-2-phosphoglycerate-binding residues include Lys341, Arg370, Ser371, and Lys392. Catalysis depends on Lys341, which acts as the Proton acceptor.

The protein belongs to the enolase family. Mg(2+) serves as cofactor.

It is found in the cytoplasm. Its subcellular location is the secreted. The protein localises to the cell surface. It catalyses the reaction (2R)-2-phosphoglycerate = phosphoenolpyruvate + H2O. The protein operates within carbohydrate degradation; glycolysis; pyruvate from D-glyceraldehyde 3-phosphate: step 4/5. In terms of biological role, catalyzes the reversible conversion of 2-phosphoglycerate (2-PG) into phosphoenolpyruvate (PEP). It is essential for the degradation of carbohydrates via glycolysis. In Borreliella burgdorferi (strain ZS7) (Borrelia burgdorferi), this protein is Enolase.